The chain runs to 220 residues: Fructose-6-phosphate aldolase 1 (220 aa).

The active-site Schiff-base intermediate with substrate is the K85.

Belongs to the transaldolase family. Type 3A subfamily. As to quaternary structure, homodecamer.

The protein resides in the cytoplasm. It carries out the reaction beta-D-fructose 6-phosphate = dihydroxyacetone + D-glyceraldehyde 3-phosphate. Its function is as follows. Catalyzes the reversible formation of fructose 6-phosphate from dihydroxyacetone and D-glyceraldehyde 3-phosphate via an aldolization reaction. This chain is Fructose-6-phosphate aldolase 1 (fsaA), found in Escherichia coli O157:H7.